Reading from the N-terminus, the 398-residue chain is tRNA-specific 2-thiouridylase MnmA (398 aa).

ATP is bound by residues Ala-20–Ser-27 and Leu-46. The active-site Nucleophile is Cys-114. Cys-114 and Cys-210 form a disulfide bridge. Gly-138 serves as a coordination point for ATP. Positions Arg-160–Gln-162 are interaction with tRNA. The Cysteine persulfide intermediate role is filled by Cys-210.

The protein belongs to the MnmA/TRMU family.

It is found in the cytoplasm. It catalyses the reaction S-sulfanyl-L-cysteinyl-[protein] + uridine(34) in tRNA + AH2 + ATP = 2-thiouridine(34) in tRNA + L-cysteinyl-[protein] + A + AMP + diphosphate + H(+). Its function is as follows. Catalyzes the 2-thiolation of uridine at the wobble position (U34) of tRNA, leading to the formation of s(2)U34. The polypeptide is tRNA-specific 2-thiouridylase MnmA (Brucella melitensis biotype 1 (strain ATCC 23456 / CCUG 17765 / NCTC 10094 / 16M)).